Reading from the N-terminus, the 130-residue chain is uncharacterized protein (130 aa).

A signal peptide spans 1–19 (MLAPLFLCCLRNLFRKLIS).

Its subcellular location is the secreted. This is an uncharacterized protein from Homo sapiens (Human).